The primary structure comprises 145 residues: Large ribosomal subunit protein bL19 (145 aa).

The segment covering 114-136 (IAEKMESPAAKATREAAKKEAKA) has biased composition (basic and acidic residues). A disordered region spans residues 114–145 (IAEKMESPAAKATREAAKKEAKAAKKNAAPAE).

Belongs to the bacterial ribosomal protein bL19 family.

Its function is as follows. This protein is located at the 30S-50S ribosomal subunit interface and may play a role in the structure and function of the aminoacyl-tRNA binding site. In Methylocella silvestris (strain DSM 15510 / CIP 108128 / LMG 27833 / NCIMB 13906 / BL2), this protein is Large ribosomal subunit protein bL19.